The following is a 782-amino-acid chain: uncharacterized protein (782 aa).

A DNA-binding region (zn(2)-C6 fungal-type) is located at residues 22–50 (CRECHRLKLKCDRVWPCENCKKRGIPNLC). Disordered stretches follow at residues 105 to 126 (GEKPAEDTKDENRSQPIHDPDH) and 645 to 665 (VPSSRPNSKSPDDSSMRAEKA). Positions 654–665 (SPDDSSMRAEKA) are enriched in basic and acidic residues.

It is found in the nucleus. This is an uncharacterized protein from Schizosaccharomyces pombe (strain 972 / ATCC 24843) (Fission yeast).